Here is a 110-residue protein sequence, read N- to C-terminus: MALWMRLLPLLALLALWGPDPAQAFVNQHLCGSHLVEALYLVCGERGFFYTPKTRREAEDLQVGQVELGGGPGAGSLQPLALEGSLQKRGIVEQCCTSICSLYQLENYCN.

Positions 1–24 are cleaved as a signal peptide; that stretch reads MALWMRLLPLLALLALWGPDPAQA. 3 cysteine pairs are disulfide-bonded: cysteine 31-cysteine 96, cysteine 43-cysteine 109, and cysteine 95-cysteine 100. Positions 57–87 are cleaved as a propeptide — c peptide; sequence EAEDLQVGQVELGGGPGAGSLQPLALEGSLQ.

The protein belongs to the insulin family. In terms of assembly, heterodimer of a B chain and an A chain linked by two disulfide bonds.

The protein resides in the secreted. Its function is as follows. Insulin decreases blood glucose concentration. It increases cell permeability to monosaccharides, amino acids and fatty acids. It accelerates glycolysis, the pentose phosphate cycle, and glycogen synthesis in liver. The polypeptide is Insulin (INS) (Pongo pygmaeus (Bornean orangutan)).